The chain runs to 132 residues: Venom CUB domain-containing protein 2 (132 aa).

The first 17 residues, M1–A17, serve as a signal peptide directing secretion. Residues E22–A129 enclose the CUB domain. 2 disulfides stabilise this stretch: C66–C125 and C77–C94.

It belongs to the venom CUB family. Expressed by the venom gland (posterior main gland) (at protein level).

It is found in the secreted. This is Venom CUB domain-containing protein 2 from Platymeris rhadamanthus (Red spot assassin bug).